A 740-amino-acid chain; its full sequence is Protein SIEVE ELEMENT OCCLUSION B (740 aa).

The segment covering 1–23 (MESLIKSQHAQQLAGHKNTTGKT) has biased composition (polar residues). The segment at 1–27 (MESLIKSQHAQQLAGHKNTTGKTPSME) is disordered.

As to quaternary structure, can form homodimer. As to expression, expressed in phloem sieve elements.

Scaffold protein required to form the phloem filament matrix in sieve elements. The protein is Protein SIEVE ELEMENT OCCLUSION B of Arabidopsis thaliana (Mouse-ear cress).